Reading from the N-terminus, the 127-residue chain is Small ribosomal subunit protein uS11 (127 aa).

The protein belongs to the universal ribosomal protein uS11 family. In terms of assembly, part of the 30S ribosomal subunit. Interacts with proteins S7 and S18. Binds to IF-3.

Its function is as follows. Located on the platform of the 30S subunit, it bridges several disparate RNA helices of the 16S rRNA. Forms part of the Shine-Dalgarno cleft in the 70S ribosome. This chain is Small ribosomal subunit protein uS11, found in Chlorobium luteolum (strain DSM 273 / BCRC 81028 / 2530) (Pelodictyon luteolum).